The primary structure comprises 272 residues: 3-methyl-2-oxobutanoate hydroxymethyltransferase (272 aa).

Residues D42 and D86 each contribute to the Mg(2+) site. Residues 42-43 (DS), D86, and K116 each bind 3-methyl-2-oxobutanoate. E118 contributes to the Mg(2+) binding site. The Proton acceptor role is filled by E185. Residues 251 to 272 (LKEQRDQRATPTTPPPPPAPDC) form a disordered region. A compositionally biased stretch (pro residues) spans 262–272 (TTPPPPPAPDC).

Belongs to the PanB family. As to quaternary structure, homodecamer; pentamer of dimers. The cofactor is Mg(2+).

It localises to the cytoplasm. It catalyses the reaction 3-methyl-2-oxobutanoate + (6R)-5,10-methylene-5,6,7,8-tetrahydrofolate + H2O = 2-dehydropantoate + (6S)-5,6,7,8-tetrahydrofolate. It functions in the pathway cofactor biosynthesis; (R)-pantothenate biosynthesis; (R)-pantoate from 3-methyl-2-oxobutanoate: step 1/2. Catalyzes the reversible reaction in which hydroxymethyl group from 5,10-methylenetetrahydrofolate is transferred onto alpha-ketoisovalerate to form ketopantoate. In Synechococcus sp. (strain CC9311), this protein is 3-methyl-2-oxobutanoate hydroxymethyltransferase.